Consider the following 120-residue polypeptide: Large ribosomal subunit protein bL19 (120 aa).

This sequence belongs to the bacterial ribosomal protein bL19 family.

This protein is located at the 30S-50S ribosomal subunit interface and may play a role in the structure and function of the aminoacyl-tRNA binding site. The protein is Large ribosomal subunit protein bL19 of Geobacillus kaustophilus (strain HTA426).